Consider the following 157-residue polypeptide: Cell number regulator 10 (157 aa).

The next 2 helical transmembrane spans lie at 41–57 and 66–83; these read DCGLCCLTCWCPCITFG and GATSCGTAGALYAVLAYF.

This sequence belongs to the cornifelin family. As to expression, expressed in roots, leaves, stalks, immature ears and silks.

Its subcellular location is the membrane. This Zea mays (Maize) protein is Cell number regulator 10 (CNR10).